The primary structure comprises 271 residues: Phosphatidylinositol transfer protein alpha isoform (271 aa).

A 1,2-diacyl-sn-glycero-3-phospho-(1D-myo-inositol) contacts are provided by threonine 59, lysine 61, glutamate 86, asparagine 90, threonine 97, and lysine 195. Residue lysine 216 is modified to N6-acetyllysine. Over residues 251-264 (TKRQLDEMRQKDPV) the composition is skewed to basic and acidic residues. The disordered stretch occupies residues 251 to 271 (TKRQLDEMRQKDPVKGMTADD).

This sequence belongs to the PtdIns transfer protein family. PI transfer class I subfamily. In terms of processing, phosphorylated by PKC in a calcium and phosphatidylserine-dependent manner. Expressed in a wide range of tissues.

The protein localises to the cytoplasm. The protein resides in the nucleus. The catalysed reaction is a 1,2-diacyl-sn-glycero-3-phosphocholine(in) = a 1,2-diacyl-sn-glycero-3-phosphocholine(out). It carries out the reaction a 1,2-diacyl-sn-glycero-3-phospho-(1D-myo-inositol)(in) = a 1,2-diacyl-sn-glycero-3-phospho-(1D-myo-inositol)(out). Phosphatidylinositol transfer activity is inhibited by N-ethylmaleimide. Its function is as follows. Catalyzes the transfer of phosphatidylinositol (PI) and phosphatidylcholine (PC) between membranes. Shows a preference for PI and PC containing shorter saturated or monosaturated acyl chains at the sn-1 and sn-2 positions. Preference order for PC is C16:1 &gt; C16:0 &gt; C18:1 &gt; C18:0 &gt; C20:4 and for PI is C16:1 &gt; C16:0 &gt; C18:1 &gt; C18:0 &gt; C20:4 &gt; C20:3. This Rattus norvegicus (Rat) protein is Phosphatidylinositol transfer protein alpha isoform (Pitpna).